We begin with the raw amino-acid sequence, 398 residues long: Phosphoglycerate kinase (398 aa).

Substrate is bound by residues 23 to 25, R38, 61 to 64, R120, and R153; these read DLN and HFGR. Residues K203, E325, and 355-358 contribute to the ATP site; that span reads GGDT.

Belongs to the phosphoglycerate kinase family. Monomer.

It localises to the cytoplasm. The catalysed reaction is (2R)-3-phosphoglycerate + ATP = (2R)-3-phospho-glyceroyl phosphate + ADP. It functions in the pathway carbohydrate degradation; glycolysis; pyruvate from D-glyceraldehyde 3-phosphate: step 2/5. The chain is Phosphoglycerate kinase from Mesorhizobium japonicum (strain LMG 29417 / CECT 9101 / MAFF 303099) (Mesorhizobium loti (strain MAFF 303099)).